A 956-amino-acid polypeptide reads, in one-letter code: DNA replication helicase (956 aa).

G120 to T127 serves as a coordination point for ATP. Residues P658–S694 are disordered. A compositionally biased stretch (low complexity) spans S667 to Q678. Over residues R679–S694 the composition is skewed to basic and acidic residues.

It belongs to the herpesviridae helicase family. As to quaternary structure, associates with the primase and the primase-associated factor to form the helicase-primase complex.

The protein localises to the host nucleus. Its function is as follows. Component of the helicase/primase complex. Unwinds the DNA at the replication forks and generates single-stranded DNA for both leading and lagging strand synthesis. The primase synthesizes short RNA primers on the lagging strand that the polymerase elongates using dNTPs. Possesses helicase-like motifs and therefore may act as the helicase subunit of the complex. This chain is DNA replication helicase, found in Human cytomegalovirus (strain Merlin) (HHV-5).